The following is a 373-amino-acid chain: Chaperone protein DnaJ (373 aa).

Residues 5–70 (DYYEVLGVAK…QKRAAYDRYG (66 aa)) form the J domain. The CR-type zinc-finger motif lies at 133–211 (GFDTEIRVPS…CDGVGRTRRN (79 aa)). The Zn(2+) site is built by cysteine 146, cysteine 149, cysteine 163, cysteine 166, cysteine 185, cysteine 188, cysteine 199, and cysteine 202. CXXCXGXG motif repeat units lie at residues 146–153 (CDTCHGSG), 163–170 (CRTCGGSG), 185–192 (CPTCHGTG), and 199–206 (CPSCDGVG).

This sequence belongs to the DnaJ family. Homodimer. It depends on Zn(2+) as a cofactor.

Its subcellular location is the cytoplasm. Its function is as follows. Participates actively in the response to hyperosmotic and heat shock by preventing the aggregation of stress-denatured proteins and by disaggregating proteins, also in an autonomous, DnaK-independent fashion. Unfolded proteins bind initially to DnaJ; upon interaction with the DnaJ-bound protein, DnaK hydrolyzes its bound ATP, resulting in the formation of a stable complex. GrpE releases ADP from DnaK; ATP binding to DnaK triggers the release of the substrate protein, thus completing the reaction cycle. Several rounds of ATP-dependent interactions between DnaJ, DnaK and GrpE are required for fully efficient folding. Also involved, together with DnaK and GrpE, in the DNA replication of plasmids through activation of initiation proteins. This is Chaperone protein DnaJ from Bordetella bronchiseptica (strain ATCC BAA-588 / NCTC 13252 / RB50) (Alcaligenes bronchisepticus).